We begin with the raw amino-acid sequence, 105 residues long: SH3 domain-binding glutamic acid-rich-like protein 2 (105 aa).

The short motif at 61–67 is the SH3-binding element; sequence KGNPLPP.

It belongs to the SH3BGR family.

The protein localises to the nucleus. The chain is SH3 domain-binding glutamic acid-rich-like protein 2 (sh3bgrl2) from Danio rerio (Zebrafish).